The primary structure comprises 760 residues: MNYYSIQNSRDSSISSIEIRICSSKSIVKKSSRILPNGNIVGEIKTAQTMNYKTLKPENSGLFCEQTFGPIKDFECACGKKYENEFIGFCAICGIEYASSQVRRNRLGYIKLVSPVVHIWYLKYISILLDIPLKSIESIVYSTDGIIFKNFFQKPKKNQILKKETFEITENLNNTYFKDSINLKYSLHVQKNIISYLKNLKQAVFILKTKQDQQLKYNFSYLYYTLNNFYSLSYSFQWEAKKQWNTIIWFFKYKQRMKENFIKIDPLQKKLNDEYFEKTFLFGTSILYCWLKYFDYNFQLLNLERQIRFTVFEIKEEIKELSGILFSYFFQKQQFISFQKKIKKLNWKKNKVFRRLKLIMYFRQAKLQPKWMILSSLPVLPPDLRPIVELGSNKIAVSDLNKSYQTIILRNLRLKKFYNNSAFNEFTEEIRYTKRLLQESVDELIQQDKSKKNNNISSKSLSDILKGKRGRFRQNLLGKRVDYSGRSVIIVDPELKLHECGIPLKMAIELFYPFIIQYLISFNLTKTIPGAKHIIHTKASFLNEIIHFVLNNYLVLLNRAPTLHKLGIQAFKPKLVTGKAIKLHPLVCPAFNADFDGDQMGMHIPLSFESRAESWKLLWSRNNLLLSSMGSPILTPGQDVVLGCYYLTSNLLDKVKTYIKPCHLNKKGENWSIYFNNLNDVLKAYNQNKVNIHTEIWIKWSENIMFENNSLDLRRLEVYSGKFFRFQYENYQINYNLKGYQLSQYIKTTVGRVIFNSLLY.

The Zn(2+) site is built by C76, C78, C90, and C93. D594, D596, and D598 together coordinate Mg(2+).

This sequence belongs to the RNA polymerase beta' chain family. RpoC1 subfamily. As to quaternary structure, in plastids the minimal PEP RNA polymerase catalytic core is composed of four subunits: alpha, beta, beta', and beta''. When a (nuclear-encoded) sigma factor is associated with the core the holoenzyme is formed, which can initiate transcription. Mg(2+) is required as a cofactor. Zn(2+) serves as cofactor.

It localises to the plastid. It is found in the chloroplast. It catalyses the reaction RNA(n) + a ribonucleoside 5'-triphosphate = RNA(n+1) + diphosphate. DNA-dependent RNA polymerase catalyzes the transcription of DNA into RNA using the four ribonucleoside triphosphates as substrates. The sequence is that of DNA-directed RNA polymerase subunit beta' from Bigelowiella natans (Pedinomonas minutissima).